The following is an 83-amino-acid chain: MKLCMTLLITAIAVVTFVVATQEESAEFNEVEESREDNCIAEDYGKCTWGGTKCCRGRPCRCSMIGTNCECTPRLIMEGLSFA.

The N-terminal stretch at M1–A20 is a signal peptide. Residues T21–R35 constitute a propeptide that is removed on maturation. 4 disulfides stabilise this stretch: C39-C55, C47-C60, C54-C71, and C62-C69. S81 is modified (D-serine (Ser)).

It belongs to the neurotoxin 02 (plectoxin) family. 03 (omega-agtx) subfamily. Post-translationally, the toxin with D-Ser (named omega-aga IVC) is 80-90 fold more potent than that with L-Ser (omega-aga IVB) against Cav2.1/CACNA1A (P-type) channels in rat cerebellar Purkinje neurons and is more resistant to proteases. The epimerization is done by the venom peptide isomerase heterodimer. In terms of tissue distribution, expressed by the venom gland.

Its subcellular location is the secreted. In terms of biological role, antagonist of voltage-gated Cav2.1/CACNA1A (P-type) calcium channels. Paralyzes insect by blocking neuromuscular transmission. This chain is Omega-agatoxin-Aa4b, found in Agelenopsis aperta (North American funnel-web spider).